A 614-amino-acid chain; its full sequence is DNA mismatch repair protein MutL (614 aa).

The protein belongs to the DNA mismatch repair MutL/HexB family.

In terms of biological role, this protein is involved in the repair of mismatches in DNA. It is required for dam-dependent methyl-directed DNA mismatch repair. May act as a 'molecular matchmaker', a protein that promotes the formation of a stable complex between two or more DNA-binding proteins in an ATP-dependent manner without itself being part of a final effector complex. This Chlorobium phaeovibrioides (strain DSM 265 / 1930) (Prosthecochloris vibrioformis (strain DSM 265)) protein is DNA mismatch repair protein MutL.